The primary structure comprises 166 residues: Large ribosomal subunit protein uL10 (166 aa).

It belongs to the universal ribosomal protein uL10 family. Part of the ribosomal stalk of the 50S ribosomal subunit. The N-terminus interacts with L11 and the large rRNA to form the base of the stalk. The C-terminus forms an elongated spine to which L12 dimers bind in a sequential fashion forming a multimeric L10(L12)X complex.

Forms part of the ribosomal stalk, playing a central role in the interaction of the ribosome with GTP-bound translation factors. This Listeria monocytogenes serotype 4b (strain CLIP80459) protein is Large ribosomal subunit protein uL10.